We begin with the raw amino-acid sequence, 566 residues long: Glucose starvation modulator protein 1 (566 aa).

Positions 20-48 (CVFCHQKHLQCSNERPCKNCVKRNIAHGC) form a DNA-binding region, zn(2)-C6 fungal-type. Disordered regions lie at residues 65 to 93 (PGAV…PMDS) and 250 to 270 (KQAS…NTLS). Polar residues predominate over residues 83–93 (PVSTSVSPMDS). A compositionally biased stretch (low complexity) spans 253–270 (SPSPSNTSTSENNTNTLS).

This sequence belongs to the ERT1/acuK family.

It localises to the nucleus. Transcription factor which regulates nonfermentable carbon utilization. The polypeptide is Glucose starvation modulator protein 1 (ZCF23) (Candida albicans (strain SC5314 / ATCC MYA-2876) (Yeast)).